The chain runs to 444 residues: UDP-N-acetylmuramate--L-alanine ligase (444 aa).

111–117 is a binding site for ATP; it reads GAHGKTS.

This sequence belongs to the MurCDEF family.

It localises to the cytoplasm. It carries out the reaction UDP-N-acetyl-alpha-D-muramate + L-alanine + ATP = UDP-N-acetyl-alpha-D-muramoyl-L-alanine + ADP + phosphate + H(+). It functions in the pathway cell wall biogenesis; peptidoglycan biosynthesis. Its function is as follows. Cell wall formation. This is UDP-N-acetylmuramate--L-alanine ligase from Leuconostoc citreum (strain KM20).